We begin with the raw amino-acid sequence, 635 residues long: 4-hydroxy-3-methylbut-2-enyl diphosphate reductase (635 aa).

The tract at residues 1 to 279 (MSIILAKKSG…KEAIFKMSNK (279 aa)) is 4-hydroxy-3-methylbut-2-enyl diphosphate reductase. Cysteine 12 contributes to the [4Fe-4S] cluster binding site. (2E)-4-hydroxy-3-methylbut-2-enyl diphosphate-binding residues include histidine 42 and histidine 77. Dimethylallyl diphosphate is bound by residues histidine 42 and histidine 77. Residues histidine 42 and histidine 77 each coordinate isopentenyl diphosphate. Cysteine 99 is a [4Fe-4S] cluster binding site. Position 127 (histidine 127) interacts with (2E)-4-hydroxy-3-methylbut-2-enyl diphosphate. Histidine 127 lines the dimethylallyl diphosphate pocket. Histidine 127 lines the isopentenyl diphosphate pocket. Catalysis depends on glutamate 129, which acts as the Proton donor. Threonine 163 lines the (2E)-4-hydroxy-3-methylbut-2-enyl diphosphate pocket. A [4Fe-4S] cluster-binding site is contributed by cysteine 191. Residues serine 219, serine 220, asparagine 221, and serine 263 each coordinate (2E)-4-hydroxy-3-methylbut-2-enyl diphosphate. Dimethylallyl diphosphate is bound by residues serine 219, serine 220, asparagine 221, and serine 263. Isopentenyl diphosphate-binding residues include serine 219, serine 220, asparagine 221, and serine 263. S1 motif domains are found at residues 298 to 373 (GQEV…LNRE), 380 to 455 (KEAF…ASRR), 476 to 544 (DTIK…LSIK), and 561 to 630 (GNIV…LSIK).

The protein in the N-terminal section; belongs to the IspH family. It depends on [4Fe-4S] cluster as a cofactor.

It catalyses the reaction isopentenyl diphosphate + 2 oxidized [2Fe-2S]-[ferredoxin] + H2O = (2E)-4-hydroxy-3-methylbut-2-enyl diphosphate + 2 reduced [2Fe-2S]-[ferredoxin] + 2 H(+). The enzyme catalyses dimethylallyl diphosphate + 2 oxidized [2Fe-2S]-[ferredoxin] + H2O = (2E)-4-hydroxy-3-methylbut-2-enyl diphosphate + 2 reduced [2Fe-2S]-[ferredoxin] + 2 H(+). It functions in the pathway isoprenoid biosynthesis; dimethylallyl diphosphate biosynthesis; dimethylallyl diphosphate from (2E)-4-hydroxy-3-methylbutenyl diphosphate: step 1/1. It participates in isoprenoid biosynthesis; isopentenyl diphosphate biosynthesis via DXP pathway; isopentenyl diphosphate from 1-deoxy-D-xylulose 5-phosphate: step 6/6. In terms of biological role, catalyzes the conversion of 1-hydroxy-2-methyl-2-(E)-butenyl 4-diphosphate (HMBPP) into a mixture of isopentenyl diphosphate (IPP) and dimethylallyl diphosphate (DMAPP). Acts in the terminal step of the DOXP/MEP pathway for isoprenoid precursor biosynthesis. The chain is 4-hydroxy-3-methylbut-2-enyl diphosphate reductase from Clostridium tetani (strain Massachusetts / E88).